We begin with the raw amino-acid sequence, 108 residues long: FK506-binding protein 1 (108 aa).

Residues 20–108 enclose the PPIase FKBP-type domain; that stretch reads GDNVTIHYVG…KFEVELLKVN (89 aa).

It belongs to the FKBP-type PPIase family. FKBP1 subfamily.

The protein resides in the cytoplasm. It catalyses the reaction [protein]-peptidylproline (omega=180) = [protein]-peptidylproline (omega=0). With respect to regulation, inhibited by both FK506 and rapamycin. In terms of biological role, PPIases accelerate the folding of proteins. It catalyzes the cis-trans isomerization of proline imidic peptide bonds in oligopeptides. This chain is FK506-binding protein 1 (FRR1), found in Cryptococcus neoformans var. grubii serotype A (strain H99 / ATCC 208821 / CBS 10515 / FGSC 9487) (Filobasidiella neoformans var. grubii).